The primary structure comprises 260 residues: Glutamate racemase (260 aa).

Substrate is bound by residues 14–15 and 46–47; these read DS and YG. Catalysis depends on Cys77, which acts as the Proton donor/acceptor. A substrate-binding site is contributed by 78-79; that stretch reads NT. Cys188 (proton donor/acceptor) is an active-site residue. 189–190 provides a ligand contact to substrate; the sequence is TH.

The protein belongs to the aspartate/glutamate racemases family.

It catalyses the reaction L-glutamate = D-glutamate. It functions in the pathway cell wall biogenesis; peptidoglycan biosynthesis. Functionally, provides the (R)-glutamate required for cell wall biosynthesis. In Clostridium perfringens (strain SM101 / Type A), this protein is Glutamate racemase.